Consider the following 90-residue polypeptide: Cell division topological specificity factor (90 aa).

The protein belongs to the MinE family.

Its function is as follows. Prevents the cell division inhibition by proteins MinC and MinD at internal division sites while permitting inhibition at polar sites. This ensures cell division at the proper site by restricting the formation of a division septum at the midpoint of the long axis of the cell. The protein is Cell division topological specificity factor of Lachnoclostridium phytofermentans (strain ATCC 700394 / DSM 18823 / ISDg) (Clostridium phytofermentans).